Here is a 720-residue protein sequence, read N- to C-terminus: Polyribonucleotide nucleotidyltransferase (720 aa).

Residues D486 and D492 each coordinate Mg(2+). A KH domain is found at 553 to 612 (PRITVINVPKEKIREVIGTGGKVIREIVEFSGAKIDIEDDGTIKIASTSEESTQKAIDRI). Residues 622–690 (GKIYNGKVVK…DRGKVKLSMR (69 aa)) enclose the S1 motif domain. Residues 698–720 (EDISDKVGPKGGRGGRGEGDLAE) are disordered.

Belongs to the polyribonucleotide nucleotidyltransferase family. Mg(2+) serves as cofactor.

It localises to the cytoplasm. It catalyses the reaction RNA(n+1) + phosphate = RNA(n) + a ribonucleoside 5'-diphosphate. Functionally, involved in mRNA degradation. Catalyzes the phosphorolysis of single-stranded polyribonucleotides processively in the 3'- to 5'-direction. This chain is Polyribonucleotide nucleotidyltransferase, found in Granulibacter bethesdensis (strain ATCC BAA-1260 / CGDNIH1).